Consider the following 248-residue polypeptide: UPF0273 protein APE_1505.1 (248 aa).

Positions 3 to 247 (DRVKTGIPGM…VVRIGRRVSI (245 aa)) constitute a KaiC domain. 30 to 37 (GGPGTGKS) provides a ligand contact to ATP.

This sequence belongs to the UPF0273 family.

This Aeropyrum pernix (strain ATCC 700893 / DSM 11879 / JCM 9820 / NBRC 100138 / K1) protein is UPF0273 protein APE_1505.1.